The sequence spans 73 residues: Large ribosomal subunit protein bL31 (73 aa).

4 residues coordinate Zn(2+): Cys-16, Cys-18, Cys-38, and Cys-41.

Belongs to the bacterial ribosomal protein bL31 family. Type A subfamily. Part of the 50S ribosomal subunit. Zn(2+) is required as a cofactor.

Functionally, binds the 23S rRNA. In Vibrio vulnificus (strain YJ016), this protein is Large ribosomal subunit protein bL31.